The following is a 546-amino-acid chain: Probable protein kinase UbiB (546 aa).

Positions 124–502 constitute a Protein kinase domain; it reads DFDIKPLASA…HVRQGQSRYL (379 aa). Residues 130–138 and Lys-153 each bind ATP; that span reads LASASIAQV. Asp-288 acts as the Proton acceptor in catalysis. Helical transmembrane passes span 501–521 and 522–542; these read YLLG…VSRP and EWGL…FVGW.

The protein belongs to the ABC1 family. UbiB subfamily.

Its subcellular location is the cell inner membrane. It participates in cofactor biosynthesis; ubiquinone biosynthesis [regulation]. Its function is as follows. Is probably a protein kinase regulator of UbiI activity which is involved in aerobic coenzyme Q (ubiquinone) biosynthesis. The sequence is that of Probable protein kinase UbiB from Escherichia fergusonii (strain ATCC 35469 / DSM 13698 / CCUG 18766 / IAM 14443 / JCM 21226 / LMG 7866 / NBRC 102419 / NCTC 12128 / CDC 0568-73).